A 239-amino-acid chain; its full sequence is Ribitol-5-phosphate cytidylyltransferase (239 aa).

Residues 7–10 and 80–86 each bind CTP; these read FAGG and GETGQMS.

It belongs to the IspD/TarI cytidylyltransferase family. TarI subfamily.

The catalysed reaction is D-ribitol 5-phosphate + CTP + H(+) = CDP-L-ribitol + diphosphate. It functions in the pathway cell wall biogenesis; poly(ribitol phosphate) teichoic acid biosynthesis. Catalyzes the transfer of the cytidylyl group of CTP to D-ribitol 5-phosphate. The protein is Ribitol-5-phosphate cytidylyltransferase of Streptococcus agalactiae serotype Ia (strain ATCC 27591 / A909 / CDC SS700).